The primary structure comprises 200 residues: 2,3-bisphosphoglycerate-dependent phosphoglycerate mutase (200 aa).

Residue histidine 9 is the Tele-phosphohistidine intermediate of the active site. Residue histidine 142 is part of the active site.

It belongs to the phosphoglycerate mutase family. Homodimer.

It carries out the reaction (2R)-2-phosphoglycerate = (2R)-3-phosphoglycerate. It participates in carbohydrate degradation; glycolysis; pyruvate from D-glyceraldehyde 3-phosphate: step 3/5. In terms of biological role, catalyzes the interconversion of 2-phosphoglycerate and 3-phosphoglycerate. The sequence is that of 2,3-bisphosphoglycerate-dependent phosphoglycerate mutase from Thermoplasma acidophilum (strain ATCC 25905 / DSM 1728 / JCM 9062 / NBRC 15155 / AMRC-C165).